The primary structure comprises 535 residues: Ankyrin repeat domain-containing protein 34C (535 aa).

ANK repeat units lie at residues 10-39 (TDGN…YINE), 43-80 (KGET…DPNI), 84-114 (SGKT…DPSL), and 118-147 (TGAS…AKGK). Disordered regions lie at residues 159–181 (SGTK…DRHS) and 214–237 (AGHP…RKVS). The span at 216 to 225 (HPSSCNTSKA) shows a compositional bias: polar residues. The residue at position 301 (serine 301) is a Phosphoserine. Residues 381–444 (DLDIQPGPDP…RRRPPHLLER (64 aa)) are disordered. A Phosphoserine modification is found at serine 447.

The protein belongs to the ANKRD34 family.

In Homo sapiens (Human), this protein is Ankyrin repeat domain-containing protein 34C (ANKRD34C).